We begin with the raw amino-acid sequence, 116 residues long: Aspartate 1-decarboxylase (116 aa).

Serine 25 acts as the Schiff-base intermediate with substrate; via pyruvic acid in catalysis. Position 25 is a pyruvic acid (Ser) (serine 25). Residue threonine 57 coordinates substrate. Catalysis depends on tyrosine 58, which acts as the Proton donor. 73-75 (GPA) contacts substrate.

The protein belongs to the PanD family. Heterooctamer of four alpha and four beta subunits. It depends on pyruvate as a cofactor. In terms of processing, is synthesized initially as an inactive proenzyme, which is activated by self-cleavage at a specific serine bond to produce a beta-subunit with a hydroxyl group at its C-terminus and an alpha-subunit with a pyruvoyl group at its N-terminus.

The protein resides in the cytoplasm. It catalyses the reaction L-aspartate + H(+) = beta-alanine + CO2. The protein operates within cofactor biosynthesis; (R)-pantothenate biosynthesis; beta-alanine from L-aspartate: step 1/1. Catalyzes the pyruvoyl-dependent decarboxylation of aspartate to produce beta-alanine. This is Aspartate 1-decarboxylase from Flavobacterium psychrophilum (strain ATCC 49511 / DSM 21280 / CIP 103535 / JIP02/86).